Consider the following 318-residue polypeptide: Gamma-glutamyl hydrolase (318 aa).

An N-terminal signal peptide occupies residues 1–24; it reads MARLGRLLSVLGLVLCGATGLGLS. Residues 25-318 enclose the Gamma-glutamyl hydrolase domain; that stretch reads APPAPTPKKP…SSFQQSYIFD (294 aa). N-linked (GlcNAc...) asparagine glycosylation is present at asparagine 116. Cysteine 134 (nucleophile) is an active-site residue. 2 N-linked (GlcNAc...) asparagine glycosylation sites follow: asparagine 163 and asparagine 203. Residue histidine 244 is the Proton donor of the active site. Asparagine 307 carries an N-linked (GlcNAc...) asparagine glycan.

The protein belongs to the peptidase C26 family. In terms of assembly, homodimer.

Its subcellular location is the secreted. It localises to the extracellular space. It is found in the lysosome. The protein localises to the melanosome. It catalyses the reaction (6S)-5,6,7,8-tetrahydrofolyl-(gamma-L-Glu)(n) + (n-1) H2O = (6S)-5,6,7,8-tetrahydrofolate + (n-1) L-glutamate. In terms of biological role, hydrolyzes the polyglutamate sidechains of pteroylpolyglutamates. Progressively removes gamma-glutamyl residues from pteroylpoly-gamma-glutamate to yield pteroyl-alpha-glutamate (folic acid) and free glutamate. May play an important role in the bioavailability of dietary pteroylpolyglutamates and in the metabolism of pteroylpolyglutamates and antifolates. Exhibits either endo- or exopeptidase activity depending upon the tissue of origin. When secreted, it acts primarily as an endopeptidase. The sequence is that of Gamma-glutamyl hydrolase (GGH) from Bos taurus (Bovine).